We begin with the raw amino-acid sequence, 901 residues long: Protein translocase subunit SecA (901 aa).

Residues Gln85, 103-107 (GEGKT), and Asp510 contribute to the ATP site. The interval 848–901 (RINQNNLPVDENSQTTQNSETEDYSDRRIGRNEPCPCGSGKKYKHCHGSRVARQ) is disordered. Residues 849–866 (INQNNLPVDENSQTTQNS) are compositionally biased toward polar residues. Residues Cys882, Cys884, Cys893, and His894 each coordinate Zn(2+). Over residues 888–901 (KKYKHCHGSRVARQ) the composition is skewed to basic residues.

Belongs to the SecA family. Monomer and homodimer. Part of the essential Sec protein translocation apparatus which comprises SecA, SecYEG and auxiliary proteins SecDF-YajC and YidC. It depends on Zn(2+) as a cofactor.

The protein resides in the cell inner membrane. The protein localises to the cytoplasm. The catalysed reaction is ATP + H2O + cellular proteinSide 1 = ADP + phosphate + cellular proteinSide 2.. In terms of biological role, part of the Sec protein translocase complex. Interacts with the SecYEG preprotein conducting channel. Has a central role in coupling the hydrolysis of ATP to the transfer of proteins into and across the cell membrane, serving both as a receptor for the preprotein-SecB complex and as an ATP-driven molecular motor driving the stepwise translocation of polypeptide chains across the membrane. In Haemophilus influenzae (strain 86-028NP), this protein is Protein translocase subunit SecA.